The chain runs to 630 residues: MSRKLDSPIKTQMAVALVKSPLNGEFREFNKVGMKTPVGRRRVFVQTETGCVLGLELDRSDNAHTVKRKLQVALNFPIEESSLTFGDLVLKNDLTAVRSDSPLLLTRNNFHRSSSTPCLSPMRADLQQRRDESSPIEILGNSVSFSFVRQMAKDITKAVKKGIDPVAVNSGLGGAYYFKNSRGESVAIVKPTDEEPYAPNNPKGFVGKALGQPGLKRSVRVGETGYREVAAYLLDKEHFANVPPTALVKITHSIFNVNDGVKASKPMEKMLVSKIASLQQFIPHDYDASEHGTSNFPVSAVHRIGILDIRILNTDRHSGNLLVKKLDGDGMFGQVELVPIDHGLCLPETLEDPYFEWIHWPQASIPFSEDELKYIANLDPLGDCEMLRRELPMVREASLRVLVLCTIFLKEAAANGLCLAEIGEMMTREVRPGDEEPSEIEVVCLEAMSLIGEKDAESPRSDLGNDIEFQFDIDCEEVTDCTKKLALPLGLTFGNARGQLSKVEETTEDGEEEEEEDREEEENDRADLEKMPTIKLSMSLKSTLLGEKSQKYQKHPGARVESAYASSAHRSADEQIPSSTSFVKLSDMSEEEWTIFLEKYQELLYPAIEKRKSITLGQKQRQRLGTSCQF.

One can recognise a Ubiquitin-like; degenerate domain in the interval 41-98; it reads RRVFVQTETGCVLGLELDRSDNAHTVKRKLQVALNFPIEESSLTFGDLVLKNDLTAVR. One can recognise a PI3K/PI4K catalytic domain in the interval 162 to 459; the sequence is GIDPVAVNSG…LIGEKDAESP (298 aa). A G-loop region spans residues 168–174; it reads VNSGLGG. ATP-binding positions include 169 to 175, Lys190, and 279 to 282; these read NSGLGGA and QQFI. A catalytic loop region spans residues 312–320; it reads LNTDRHSGN. The segment at 339–365 is activation loop; the sequence is PIDHGLCLPETLEDPYFEWIHWPQASI. Asp341 contacts ATP. The segment at 500 to 527 is disordered; that stretch reads LSKVEETTEDGEEEEEEDREEEENDRAD. Residues 506–524 are compositionally biased toward acidic residues; sequence TTEDGEEEEEEDREEEEND. Ser571 bears the Phosphoserine mark.

This sequence belongs to the PI3/PI4-kinase family. Type II PI4K subfamily. Interacts with AHK2.

The enzyme catalyses a 1,2-diacyl-sn-glycero-3-phospho-(1D-myo-inositol) + ATP = a 1,2-diacyl-sn-glycero-3-phospho-(1D-myo-inositol 4-phosphate) + ADP + H(+). Functionally, the phosphorylation of phosphatidylinositol (PI) to PI4P is the first committed step in the generation of phosphatidylinositol 4,5-bisphosphate (PIP2), a precursor of the second messenger inositol 1,4,5-trisphosphate (InsP3). The sequence is that of Phosphatidylinositol 4-kinase gamma 5 (PI4KG5) from Arabidopsis thaliana (Mouse-ear cress).